We begin with the raw amino-acid sequence, 635 residues long: MGKIIGIDLGTTNSCVAVLDGDKPRVIENAEGERTTPSVIAYTDGETLVGQPAKRQAVTNPQNTLFAIKRLIGRRFEDEEVQRDIKIMPYKIVKADNGDAWVEAKGQKMAAPQVSAEVLKKMKKTAEDFLGEPVTAAVITVPAYFNDAQRQATKDAGRIAGLEVKRIINEPTAAALAYGLDKQGGDRTIAVYDLGGGTFDISIIEIDEVEGEKTFEVLSTNGDTHLGGEDFDNRMINYLVDEFKKDQGIDLRNDPLAMQRLKEAAEKAKIELSSAQQTDVNLPYITADATGPKHMNIKVTRAKLEALVEDLVQRSLEPLKVALADADLSVNDITDVILVGGQTRMPMVQKKVAEFFGKEPRKDVNPDEAVAVGAAVQGGVLAGEVKDVLLLDVTPLSLGIETMGGVMTKLIEKNTTIPTKANQVFSTAEDNQSAVTIHVLQGERKQAMYNKSLGQFNLEGINPAPRGMPQIEVIFDLDADGILHVSAKDKQTGKEQKITIQASGGLSDAEIEKMVQEAEANKEADKKFEELATARNQADQMIHATRKQITEAGEALPADEKAKIETAINELETAKKGEDKAEIDAKVQALMAAAQKLMEIAQQQAQAQGANAGQSSAKEDDVVDAEFEEVNDDKK.

Position 198 is a phosphothreonine; by autocatalysis (Thr198). Positions 601–616 (AQQQAQAQGANAGQSS) are enriched in low complexity. Residues 601-635 (AQQQAQAQGANAGQSSAKEDDVVDAEFEEVNDDKK) are disordered. Over residues 621-635 (DVVDAEFEEVNDDKK) the composition is skewed to acidic residues.

The protein belongs to the heat shock protein 70 family.

Functionally, acts as a chaperone. This Vibrio cholerae serotype O1 (strain ATCC 39541 / Classical Ogawa 395 / O395) protein is Chaperone protein DnaK.